Here is a 316-residue protein sequence, read N- to C-terminus: Ribosomal protein L11 methyltransferase (316 aa).

Positions 157, 178, 200, and 243 each coordinate S-adenosyl-L-methionine.

The protein belongs to the methyltransferase superfamily. PrmA family.

Its subcellular location is the cytoplasm. It catalyses the reaction L-lysyl-[protein] + 3 S-adenosyl-L-methionine = N(6),N(6),N(6)-trimethyl-L-lysyl-[protein] + 3 S-adenosyl-L-homocysteine + 3 H(+). Functionally, methylates ribosomal protein L11. In Streptococcus pneumoniae (strain 70585), this protein is Ribosomal protein L11 methyltransferase.